We begin with the raw amino-acid sequence, 406 residues long: Cysteine desulfurase (406 aa).

Lys226 is subject to N6-(pyridoxal phosphate)lysine. The active-site Cysteine persulfide intermediate is the Cys364.

Belongs to the class-V pyridoxal-phosphate-dependent aminotransferase family. Csd subfamily. As to quaternary structure, homodimer. Interacts with SufE and the SufBCD complex composed of SufB, SufC and SufD. The interaction with SufE is required to mediate the direct transfer of the sulfur atom from the S-sulfanylcysteine. It depends on pyridoxal 5'-phosphate as a cofactor.

The protein resides in the cytoplasm. The enzyme catalyses (sulfur carrier)-H + L-cysteine = (sulfur carrier)-SH + L-alanine. The catalysed reaction is L-selenocysteine + AH2 = hydrogenselenide + L-alanine + A + H(+). The protein operates within cofactor biosynthesis; iron-sulfur cluster biosynthesis. Its function is as follows. Cysteine desulfurases mobilize the sulfur from L-cysteine to yield L-alanine, an essential step in sulfur metabolism for biosynthesis of a variety of sulfur-containing biomolecules. Component of the suf operon, which is activated and required under specific conditions such as oxidative stress and iron limitation. Acts as a potent selenocysteine lyase in vitro, that mobilizes selenium from L-selenocysteine. Selenocysteine lyase activity is however unsure in vivo. This is Cysteine desulfurase from Escherichia coli O7:K1 (strain IAI39 / ExPEC).